The sequence spans 1043 residues: Ack-related non-receptor tyrosine kinase (1043 aa).

Residues 113–379 (ITLCKELGQG…SDIVAKFPER (267 aa)) enclose the Protein kinase domain. ATP is bound by residues 119-127 (LGQGEFGSV) and Lys-146. Asp-241 serves as the catalytic Proton acceptor. Residues 379 to 444 (RRAQSVRAVV…RPTDTVAHLG (66 aa)) enclose the SH3 domain. The segment at 443–481 (LGSEPPCSNGTIENGFSEKEKGGKKNKKAEKESERERKK) is disordered. Positions 458 to 481 (FSEKEKGGKKNKKAEKESERERKK) are enriched in basic and acidic residues. In terms of domain architecture, CRIB spans 484–498 (ISEPVGDVRHTCHVG). Disordered stretches follow at residues 514–644 (MCPT…SAAN), 790–842 (KINE…GWSS), 859–898 (KQAS…LSVR), and 932–993 (LIDG…RQFP). Residues 516–543 (PTSSSPSTSRGSQASPAPSHTSSSTTSS) are compositionally biased toward low complexity. Polar residues predominate over residues 610-624 (GNQHSVQVHDQFSSL). Residues 630–644 (SLTPTAPPLTASAAN) show a composition bias toward low complexity. A coiled-coil region spans residues 785–812 (EQEVRKINEKSAREHRKTEDLLREERQK). Over residues 790–818 (KINEKSAREHRKTEDLLREERQKEQKPGE) the composition is skewed to basic and acidic residues. The segment covering 825 to 842 (PAESLYSTRTPQQEGWSS) has biased composition (polar residues). Positions 870–884 (PTSSRLSTLDRSSIS) are enriched in low complexity.

It belongs to the protein kinase superfamily. Tyr protein kinase family. The cofactor is Mg(2+).

The catalysed reaction is L-tyrosyl-[protein] + ATP = O-phospho-L-tyrosyl-[protein] + ADP + H(+). The enzyme catalyses L-seryl-[protein] + ATP = O-phospho-L-seryl-[protein] + ADP + H(+). It catalyses the reaction L-threonyl-[protein] + ATP = O-phospho-L-threonyl-[protein] + ADP + H(+). Its function is as follows. Probable tyrosine protein kinase which plays a role in vulva development, probably by acting as a negative regulator of the let-23/EGFR and let-60/ras pathway. Involved in the negative regulation of germline development. This chain is Ack-related non-receptor tyrosine kinase, found in Caenorhabditis elegans.